The chain runs to 469 residues: Neuraminidase (469 aa).

Residues Met-1–Thr-9 lie on the Intravirion side of the membrane. The chain crosses the membrane as a helical span at residues Ile-10–Val-30. The tract at residues Gly-11 to Val-33 is involved in apical transport and lipid raft association. At Thr-31–Ile-469 the chain is on the virion surface side. The hypervariable stalk region stretch occupies residues His-36–Ser-88. N-linked (GlcNAc...) asparagine; by host glycans are attached at residues Asn-61, Asn-69, Asn-70, and Asn-86. Residues Gln-91–Ile-469 form a head of neuraminidase region. Disulfide bonds link Cys-92–Cys-417, Cys-124–Cys-129, Cys-183–Cys-230, Cys-232–Cys-237, Cys-278–Cys-291, Cys-280–Cys-289, Cys-318–Cys-337, and Cys-421–Cys-447. Substrate is bound at residue Arg-118. Asn-146 is a glycosylation site (N-linked (GlcNAc...) asparagine; by host). The active-site Proton donor/acceptor is the Asp-151. Arg-152 contributes to the substrate binding site. Asn-200 and Asn-234 each carry an N-linked (GlcNAc...) asparagine; by host glycan. A substrate-binding site is contributed by Glu-276–Glu-277. Arg-292 lines the substrate pocket. Asp-293, Gly-297, and Asp-324 together coordinate Ca(2+). The disordered stretch occupies residues Asp-324–Lys-350. Residues Ser-333–Asn-342 show a composition bias toward low complexity. Arg-371 contributes to the substrate binding site. Asn-402 carries N-linked (GlcNAc...) asparagine; by host glycosylation. Tyr-406 serves as the catalytic Nucleophile.

Belongs to the glycosyl hydrolase 34 family. In terms of assembly, homotetramer. Ca(2+) serves as cofactor. Post-translationally, N-glycosylated.

Its subcellular location is the virion membrane. The protein localises to the host apical cell membrane. It catalyses the reaction Hydrolysis of alpha-(2-&gt;3)-, alpha-(2-&gt;6)-, alpha-(2-&gt;8)- glycosidic linkages of terminal sialic acid residues in oligosaccharides, glycoproteins, glycolipids, colominic acid and synthetic substrates.. With respect to regulation, inhibited by the neuraminidase inhibitors zanamivir (Relenza) and oseltamivir (Tamiflu). These drugs interfere with the release of progeny virus from infected cells and are effective against all influenza strains. Resistance to neuraminidase inhibitors is quite rare. Catalyzes the removal of terminal sialic acid residues from viral and cellular glycoconjugates. Cleaves off the terminal sialic acids on the glycosylated HA during virus budding to facilitate virus release. Additionally helps virus spread through the circulation by further removing sialic acids from the cell surface. These cleavages prevent self-aggregation and ensure the efficient spread of the progeny virus from cell to cell. Otherwise, infection would be limited to one round of replication. Described as a receptor-destroying enzyme because it cleaves a terminal sialic acid from the cellular receptors. May facilitate viral invasion of the upper airways by cleaving the sialic acid moieties on the mucin of the airway epithelial cells. Likely to plays a role in the budding process through its association with lipid rafts during intracellular transport. May additionally display a raft-association independent effect on budding. Plays a role in the determination of host range restriction on replication and virulence. Sialidase activity in late endosome/lysosome traffic seems to enhance virus replication. The chain is Neuraminidase from Aves (whales).